The primary structure comprises 1068 residues: TSC22 domain family protein 1 (1068 aa).

A required for interaction with TGFBR1 and promotion of TGF-beta signaling region spans residues 1–98 (MHQPPESTAA…SQAQLQAQPL (98 aa)). Disordered regions lie at residues 23–110 (AHPA…KKSG), 125–288 (ISSN…SPAS), and 602–623 (YSQA…QQLQ). The span at 36-55 (GSASALNAAGTGVGSSATSS) shows a compositional bias: low complexity. Pro residues predominate over residues 58–70 (FPPPSLLQPPPPA). The span at 84-100 (SLNLLSQAQLQAQPLAP) shows a compositional bias: low complexity. Over residues 133–142 (EDTESYDDLD) the composition is skewed to acidic residues. The span at 216-240 (HPHHLHHHHHIHHGHHLQHGHHHPS) shows a compositional bias: basic residues. Residues 241–250 (HVAVASASIP) are compositionally biased toward low complexity. A compositionally biased stretch (polar residues) spans 261–271 (KLSTTGSSDSI). Serine 263 carries the phosphoserine modification. Low complexity predominate over residues 272-288 (TPVAPTSAVSSSGSPAS). The span at 609–620 (VQTPLPGAPPPQ) shows a compositional bias: pro residues. The leucine-zipper stretch occupies residues 1000 to 1021 (VLKEQIKELIEKNSQLEQENNL). A disordered region spans residues 1032–1068 (AQFQAQLQTGSPPATTQPQGTTQPPAQPASQGSGPTA). Over residues 1039–1068 (QTGSPPATTQPQGTTQPPAQPASQGSGPTA) the composition is skewed to low complexity.

This sequence belongs to the TSC-22/Dip/Bun family. As to quaternary structure, forms homodimers. Forms heterodimers. Component of a complex composed of TSC22D1 (via N-terminus), TGFBR1 and TGFBR2; the interaction between TSC22D1 and TGFBR1 is inhibited by SMAD7 and promoted by TGFB1. Interacts with SMAD7; the interaction requires TGF-beta and the interaction is inhibited by TGFBR1. Interacts with TPT1/fortilin; interaction results in the destabilization of TSC22D1 protein and prevents TSC22D1-mediated apoptosis. Interacts with SMAD4 (via N-terminus). Interacts with ACVRL1/ALK1, ACVR1/ALK2, BMPR1A/ALK3, ACVR1B/ALK4, BMPR1B/ALK6, ACVR2A/ACTRII, and BMPR2. Interacts with SMAD6. Interacts with TFE3; the interaction is enhanced in the presence of TGF-beta. Forms a heterodimer with TSC22D4/THG1. In terms of assembly, forms a heterodimer with TSC22D4/THG1. Interacts with histone H1-2. Interacts with GNL3.

It localises to the cytoplasm. It is found in the nucleus. The protein resides in the cell membrane. The protein localises to the mitochondrion. In terms of biological role, transcriptional repressor. Acts on the C-type natriuretic peptide (CNP) promoter. Acts to promote CASP3-mediated apoptosis. Positively regulates TGF-beta signaling by interacting with SMAD7 which inhibits binding of SMAD7 to TGFBR1, preventing recruitment of SMURF ubiquitin ligases to TGFBR1 and inhibiting SMURF-mediated ubiquitination and degradation of TGFBR1. Contributes to enhancement of TGF-beta signaling by binding to and modulating the transcription activator activity of SMAD4. Promotes TGF-beta-induced transcription of COL1A2; via its interaction with TFE3 at E-boxes in the gene proximal promoter. Plays a role in the repression of hematopoietic precursor cell growth. Promotes IL2 deprivation-induced apoptosis in T-lymphocytes, via repression of TSC22D3/GILZ transcription and activation of the caspase cascade. Its function is as follows. May act to negatively regulate TGFB3 signaling and thereby inhibit cell death in mammary gland cells. Functionally, positively regulates cell death in response to TGFB3 during mammary gland involution. The protein is TSC22 domain family protein 1 of Macaca fascicularis (Crab-eating macaque).